Here is a 356-residue protein sequence, read N- to C-terminus: PEP-dependent dihydroxyacetone kinase, dihydroxyacetone-binding subunit DhaK (356 aa).

The region spanning 7 to 352 is the DhaK domain; the sequence is DVQDVLDEQL…WDAPVHTPAL (346 aa). Dihydroxyacetone is bound by residues 53-56, lysine 104, and aspartate 109; that span reads GSGH. Histidine 56 (proton acceptor) is an active-site residue. Residue histidine 218 is the Tele-hemiaminal-histidine intermediate of the active site.

Homodimer. The dihydroxyacetone kinase complex is composed of a homodimer of DhaM, a homodimer of DhaK and the subunit DhaL. DhaL also forms a complex with DhaR.

The catalysed reaction is dihydroxyacetone + phosphoenolpyruvate = dihydroxyacetone phosphate + pyruvate. Its pathway is polyol metabolism; glycerol degradation. With respect to regulation, inhibited by chloro-3-hydroxyacetone and D,L-glyceraldehyde. Its function is as follows. Dihydroxyacetone binding subunit of the dihydroxyacetone kinase, which is responsible for the phosphoenolpyruvate (PEP)-dependent phosphorylation of dihydroxyacetone via a phosphoryl group transfer from DhaL-ATP. Binds covalently dihydroxyacetone in hemiaminal linkage. DhaK also acts as corepressor of the transcription activator DhaR by binding to the sensor domain of DhaR. In the presence of dihydroxyacetone, DhaL-ADP displaces DhaK and stimulates DhaR activity. In the absence of dihydroxyacetone, DhaL-ADP is converted by the PTS to DhaL-ATP, which does not bind to DhaR. This chain is PEP-dependent dihydroxyacetone kinase, dihydroxyacetone-binding subunit DhaK, found in Escherichia coli (strain K12).